A 1435-amino-acid chain; its full sequence is DNA polymerase III PolC-type (1435 aa).

In terms of domain architecture, Exonuclease spans 420–576; that stretch reads YVVFDVETTG…YDTEATAYIF (157 aa).

It belongs to the DNA polymerase type-C family. PolC subfamily.

Its subcellular location is the cytoplasm. The enzyme catalyses DNA(n) + a 2'-deoxyribonucleoside 5'-triphosphate = DNA(n+1) + diphosphate. Functionally, required for replicative DNA synthesis. This DNA polymerase also exhibits 3' to 5' exonuclease activity. The chain is DNA polymerase III PolC-type from Staphylococcus aureus.